Consider the following 506-residue polypeptide: Maturase K (506 aa).

The protein belongs to the intron maturase 2 family. MatK subfamily.

It localises to the plastid. The protein localises to the chloroplast. In terms of biological role, usually encoded in the trnK tRNA gene intron. Probably assists in splicing its own and other chloroplast group II introns. The sequence is that of Maturase K from Gaultheria procumbens (Wintergreen).